Reading from the N-terminus, the 335-residue chain is ADP-L-glycero-D-manno-heptose-6-epimerase (335 aa).

NADP(+) contacts are provided by residues 11-12 (FI), 32-33 (DD), Lys39, 75-79 (EGACS), and Asn92. Tyr139 (proton acceptor) is an active-site residue. Lys143 contributes to the NADP(+) binding site. Asn172 is a substrate binding site. 2 residues coordinate NADP(+): Val173 and Lys181. Lys181 functions as the Proton acceptor in the catalytic mechanism. Substrate is bound by residues Arg183, His190, 204–207 (FGDY), Arg217, and Tyr296.

This sequence belongs to the NAD(P)-dependent epimerase/dehydratase family. HldD subfamily. Homopentamer. NADP(+) serves as cofactor.

It carries out the reaction ADP-D-glycero-beta-D-manno-heptose = ADP-L-glycero-beta-D-manno-heptose. It functions in the pathway nucleotide-sugar biosynthesis; ADP-L-glycero-beta-D-manno-heptose biosynthesis; ADP-L-glycero-beta-D-manno-heptose from D-glycero-beta-D-manno-heptose 7-phosphate: step 4/4. In terms of biological role, catalyzes the interconversion between ADP-D-glycero-beta-D-manno-heptose and ADP-L-glycero-beta-D-manno-heptose via an epimerization at carbon 6 of the heptose. This Polaromonas naphthalenivorans (strain CJ2) protein is ADP-L-glycero-D-manno-heptose-6-epimerase.